Reading from the N-terminus, the 292-residue chain is Protease HtpX (292 aa).

The next 2 membrane-spanning stretches (helical) occupy residues 5-25 (IFLF…VMSV) and 34-54 (SGLL…SLLL). H140 is a binding site for Zn(2+). The active site involves E141. H144 contributes to the Zn(2+) binding site. Transmembrane regions (helical) follow at residues 155-175 (LLQG…GGII) and 193-213 (IIVF…AMWF). E218 is a binding site for Zn(2+).

It belongs to the peptidase M48B family. Zn(2+) is required as a cofactor.

The protein localises to the cell inner membrane. The protein is Protease HtpX of Xanthomonas oryzae pv. oryzae (strain PXO99A).